The sequence spans 464 residues: Siroheme synthase (464 aa).

The interval 1–203 is precorrin-2 dehydrogenase /sirohydrochlorin ferrochelatase; that stretch reads MDYLPLFHKL…GQGAEAERLL (203 aa). Residues 22 to 23 and 43 to 44 contribute to the NAD(+) site; these read EI and PE. S128 bears the Phosphoserine mark. The interval 216-464 is uroporphyrinogen-III C-methyltransferase; sequence GEVYLVGAGP…AWFEGSQQDQ (249 aa). P225 contacts S-adenosyl-L-methionine. The active-site Proton acceptor is the D248. Catalysis depends on K270, which acts as the Proton donor. Residues 301–303, I306, 331–332, M383, and G412 each bind S-adenosyl-L-methionine; these read GGD and TA.

It in the N-terminal section; belongs to the precorrin-2 dehydrogenase / sirohydrochlorin ferrochelatase family. The protein in the C-terminal section; belongs to the precorrin methyltransferase family.

It catalyses the reaction uroporphyrinogen III + 2 S-adenosyl-L-methionine = precorrin-2 + 2 S-adenosyl-L-homocysteine + H(+). It carries out the reaction precorrin-2 + NAD(+) = sirohydrochlorin + NADH + 2 H(+). The enzyme catalyses siroheme + 2 H(+) = sirohydrochlorin + Fe(2+). The protein operates within cofactor biosynthesis; adenosylcobalamin biosynthesis; precorrin-2 from uroporphyrinogen III: step 1/1. Its pathway is cofactor biosynthesis; adenosylcobalamin biosynthesis; sirohydrochlorin from precorrin-2: step 1/1. It participates in porphyrin-containing compound metabolism; siroheme biosynthesis; precorrin-2 from uroporphyrinogen III: step 1/1. It functions in the pathway porphyrin-containing compound metabolism; siroheme biosynthesis; siroheme from sirohydrochlorin: step 1/1. The protein operates within porphyrin-containing compound metabolism; siroheme biosynthesis; sirohydrochlorin from precorrin-2: step 1/1. Multifunctional enzyme that catalyzes the SAM-dependent methylations of uroporphyrinogen III at position C-2 and C-7 to form precorrin-2 via precorrin-1. Then it catalyzes the NAD-dependent ring dehydrogenation of precorrin-2 to yield sirohydrochlorin. Finally, it catalyzes the ferrochelation of sirohydrochlorin to yield siroheme. This is Siroheme synthase from Pseudomonas putida (strain W619).